A 193-amino-acid polypeptide reads, in one-letter code: Orotate phosphoribosyltransferase (193 aa).

Residues Arg-107, Lys-108, Lys-111, His-113, and 133–141 (EDVITSGGS) each bind 5-phospho-alpha-D-ribose 1-diphosphate. Orotate-binding residues include Thr-137 and Arg-165.

The protein belongs to the purine/pyrimidine phosphoribosyltransferase family. PyrE subfamily. As to quaternary structure, homodimer. The cofactor is Mg(2+).

The enzyme catalyses orotidine 5'-phosphate + diphosphate = orotate + 5-phospho-alpha-D-ribose 1-diphosphate. It functions in the pathway pyrimidine metabolism; UMP biosynthesis via de novo pathway; UMP from orotate: step 1/2. Its function is as follows. Catalyzes the transfer of a ribosyl phosphate group from 5-phosphoribose 1-diphosphate to orotate, leading to the formation of orotidine monophosphate (OMP). This is Orotate phosphoribosyltransferase from Rhodopirellula baltica (strain DSM 10527 / NCIMB 13988 / SH1).